A 219-amino-acid polypeptide reads, in one-letter code: MFRIHCNKCFRRRNVEPTLIFHMTQCQHVLCASCLSESSTDKKCPLCKRDLRAIPIDKNLPPNVAQYFEDPLRFQQLYRKISKFQADQRASDNLGFYRQMQEHEKNESRLKGFCKMEAQFNQQIQKEKERIAELRAYIKYHEEEGLKEWPHATGVEKPWSNQARGLRPRTPSVTTSDNTQSDEHMTTFCLDSDIDCLEEDEPRRYVKKTFNGNIKDFHI.

The segment at 6–48 (CNKCFRRRNVEPTLIFHMTQCQHVLCASCLSESSTDKKCPLCK) adopts an RING-type zinc-finger fold. The interval 161 to 181 (NQARGLRPRTPSVTTSDNTQS) is disordered.

As to quaternary structure, may interact with itself, with narya and vilya through its RING-type zinc finger.

Functionally, required for the formation of DNA double-strand breaks together with narya and vilya during the meiotic recombination process. Plays a redundant role with narya in chromosome segregation during female meiosis. This chain is RING finger protein nenya, found in Drosophila melanogaster (Fruit fly).